The sequence spans 234 residues: MIPYLGPLDLFPPVEMAREDMGGLLAVGGDLQPDRLLDAYRRGIFPWGTVEGQPLWYSPNPRMVLFPEEFRLTRSLKKTLRSGKFEVRFDSNFRGVMANCASTPRPGQDGTWISPEMKHAYTRLHELGWAHSVETYEEGVMVGGLYGLAIGHMFYGESMFSHRTDASKVAFAHLVDYLVNNQFGMIDCQMYTDHLASLGGREIPRDAFQARLSALTASGSPRTVWSTDPLDPAR.

This sequence belongs to the L/F-transferase family.

It localises to the cytoplasm. The enzyme catalyses N-terminal L-lysyl-[protein] + L-leucyl-tRNA(Leu) = N-terminal L-leucyl-L-lysyl-[protein] + tRNA(Leu) + H(+). It carries out the reaction N-terminal L-arginyl-[protein] + L-leucyl-tRNA(Leu) = N-terminal L-leucyl-L-arginyl-[protein] + tRNA(Leu) + H(+). It catalyses the reaction L-phenylalanyl-tRNA(Phe) + an N-terminal L-alpha-aminoacyl-[protein] = an N-terminal L-phenylalanyl-L-alpha-aminoacyl-[protein] + tRNA(Phe). In terms of biological role, functions in the N-end rule pathway of protein degradation where it conjugates Leu, Phe and, less efficiently, Met from aminoacyl-tRNAs to the N-termini of proteins containing an N-terminal arginine or lysine. The sequence is that of Leucyl/phenylalanyl-tRNA--protein transferase from Dechloromonas aromatica (strain RCB).